Here is a 1042-residue protein sequence, read N- to C-terminus: Isoleucine--tRNA ligase (1042 aa).

The 'HIGH' region motif lies at 48-58 (PFATGLPHFGH). The short motif at 594 to 598 (KMSKS) is the 'KMSKS' region element. Position 597 (Lys-597) interacts with ATP.

Belongs to the class-I aminoacyl-tRNA synthetase family. IleS type 2 subfamily. In terms of assembly, monomer. The cofactor is Zn(2+).

It localises to the cytoplasm. The catalysed reaction is tRNA(Ile) + L-isoleucine + ATP = L-isoleucyl-tRNA(Ile) + AMP + diphosphate. In terms of biological role, catalyzes the attachment of isoleucine to tRNA(Ile). As IleRS can inadvertently accommodate and process structurally similar amino acids such as valine, to avoid such errors it has two additional distinct tRNA(Ile)-dependent editing activities. One activity is designated as 'pretransfer' editing and involves the hydrolysis of activated Val-AMP. The other activity is designated 'posttransfer' editing and involves deacylation of mischarged Val-tRNA(Ile). The polypeptide is Isoleucine--tRNA ligase (Borreliella afzelii (strain PKo) (Borrelia afzelii)).